Consider the following 98-residue polypeptide: Feather keratin 3 (98 aa).

Belongs to the avian keratin family. As to quaternary structure, the avian keratins (F-ker, S-ker, C-ker and B-ker) are a complex mixture of very similar polypeptides.

This chain is Feather keratin 3, found in Gallus gallus (Chicken).